The sequence spans 303 residues: Methyltransferase ktnA (303 aa).

Belongs to the class I-like SAM-binding methyltransferase superfamily. It depends on S-adenosyl-L-methionine as a cofactor.

Non-reducing polyketide synthase; part of the gene cluster that mediates the biosynthesis of the bicoumarin kotanin. The non-reducing polyketide synthase ktnS first catalyzes the formation of the pentaketidic 4,7-dihydroxy-5-methylcoumarin from acetyl coenzyme A and 4 malonyl coenzyme A molecules. Further O-methylation by ktnB leads to the formation of 7-demethylsiderin. Then, an oxidative phenol coupling catalyzed by the cytochrome P450 monooxygenase ktnC forms the 8,8'-dimer P-orlandin via dimerization the monomeric precursor, 7-demethylsiderin. P-orlandin is subsequently O-methylated in a stepwise fashion to demethylkotanin and kotanin. The function of ktnA within the pathway has not been determined yet. The chain is Methyltransferase ktnA from Aspergillus niger (strain ATCC MYA-4892 / CBS 513.88 / FGSC A1513).